A 160-amino-acid polypeptide reads, in one-letter code: 3-hydroxyacyl-[acyl-carrier-protein] dehydratase FabZ (160 aa).

Residue histidine 60 is part of the active site.

Belongs to the thioester dehydratase family. FabZ subfamily.

It is found in the cytoplasm. It catalyses the reaction a (3R)-hydroxyacyl-[ACP] = a (2E)-enoyl-[ACP] + H2O. Its function is as follows. Involved in unsaturated fatty acids biosynthesis. Catalyzes the dehydration of short chain beta-hydroxyacyl-ACPs and long chain saturated and unsaturated beta-hydroxyacyl-ACPs. The chain is 3-hydroxyacyl-[acyl-carrier-protein] dehydratase FabZ from Rhodospirillum rubrum (strain ATCC 11170 / ATH 1.1.1 / DSM 467 / LMG 4362 / NCIMB 8255 / S1).